We begin with the raw amino-acid sequence, 162 residues long: ATP synthase subunit b (162 aa).

The chain crosses the membrane as a helical span at residues 10–29 (LIWTIINFAVLLWGMHRFLY).

Belongs to the ATPase B chain family. As to quaternary structure, F-type ATPases have 2 components, F(1) - the catalytic core - and F(0) - the membrane proton channel. F(1) has five subunits: alpha(3), beta(3), gamma(1), delta(1), epsilon(1). F(0) has three main subunits: a(1), b(2) and c(10-14). The alpha and beta chains form an alternating ring which encloses part of the gamma chain. F(1) is attached to F(0) by a central stalk formed by the gamma and epsilon chains, while a peripheral stalk is formed by the delta and b chains.

The protein localises to the cell membrane. F(1)F(0) ATP synthase produces ATP from ADP in the presence of a proton or sodium gradient. F-type ATPases consist of two structural domains, F(1) containing the extramembraneous catalytic core and F(0) containing the membrane proton channel, linked together by a central stalk and a peripheral stalk. During catalysis, ATP synthesis in the catalytic domain of F(1) is coupled via a rotary mechanism of the central stalk subunits to proton translocation. Functionally, component of the F(0) channel, it forms part of the peripheral stalk, linking F(1) to F(0). This chain is ATP synthase subunit b, found in Symbiobacterium thermophilum (strain DSM 24528 / JCM 14929 / IAM 14863 / T).